We begin with the raw amino-acid sequence, 2711 residues long: Chromodomain-helicase-DNA-binding protein 6 (2711 aa).

4 stretches are compositionally biased toward basic and acidic residues: residues methionine 1–leucine 12, glutamate 100–proline 115, glutamate 122–lysine 151, and glutamate 158–cysteine 171. Disordered regions lie at residues methionine 1–alanine 52 and glutamate 66–arginine 243. A required for DNA-dependent ATPase activity region spans residues methionine 1 to histidine 746. The segment covering serine 214–glutamate 224 has biased composition (low complexity). Chromo domains lie at asparagine 291–arginine 342 and isoleucine 374–glutamate 438. The 175-residue stretch at leucine 472–serine 646 folds into the Helicase ATP-binding domain. Aspartate 485 to threonine 492 lines the ATP pocket. Positions aspartate 597–histidine 600 match the DEAH box motif. One can recognise a Helicase C-terminal domain in the interval leucine 786–leucine 955. The tract at residues serine 1318 to valine 1389 is disordered. The span at serine 1320–threonine 1329 shows a compositional bias: polar residues. Residues isoleucine 1332–glycine 1350 are compositionally biased toward basic and acidic residues. The region spanning arginine 1448–valine 1502 is the Myb-like domain. Phosphoserine is present on serine 1865. 7 disordered regions span residues serine 1951–glycine 1978, glutamate 1997–isoleucine 2059, leucine 2124–histidine 2147, threonine 2321–lysine 2350, glycine 2373–leucine 2419, serine 2550–serine 2602, and arginine 2641–asparagine 2711. The segment covering serine 2017–glycine 2036 has biased composition (basic and acidic residues). Composition is skewed to low complexity over residues serine 2130–serine 2140 and alanine 2333–glutamate 2349. A compositionally biased stretch (low complexity) spans serine 2550 to threonine 2563. Residues lysine 2565–proline 2586 show a composition bias toward basic and acidic residues. Polar residues-rich tracts occupy residues phenylalanine 2591–serine 2602 and serine 2677–valine 2688. The segment covering proline 2690–asparagine 2711 has biased composition (basic and acidic residues).

Belongs to the SNF2/RAD54 helicase family. As to quaternary structure, interacts with NFE2L2; involved in activation of the transcription. In terms of tissue distribution, widely expressed.

It localises to the nucleus. The protein resides in the nucleoplasm. It catalyses the reaction ATP + H2O = ADP + phosphate + H(+). Its function is as follows. ATP-dependent chromatin-remodeling factor. Regulates transcription by disrupting nucleosomes in a largely non-sliding manner which strongly increases the accessibility of chromatin. Activates transcription of specific genes in response to oxidative stress through interaction with NFE2L2. The chain is Chromodomain-helicase-DNA-binding protein 6 (Chd6) from Mus musculus (Mouse).